The sequence spans 87 residues: UPF0213 protein SYNAS_10430 (87 aa).

In terms of domain architecture, GIY-YIG spans 2–78 (SKNYVYILEC…KKMSRAEKLQ (77 aa)).

Belongs to the UPF0213 family.

In Syntrophus aciditrophicus (strain SB), this protein is UPF0213 protein SYNAS_10430.